The following is a 322-amino-acid chain: Fructose-1,6-bisphosphatase class 1 (322 aa).

4 residues coordinate Mg(2+): E84, D103, L105, and D106. Residues 106-109 (DGSS), N198, and K264 each bind substrate. Mg(2+) is bound at residue E270.

This sequence belongs to the FBPase class 1 family. In terms of assembly, homotetramer. The cofactor is Mg(2+).

It localises to the cytoplasm. It catalyses the reaction beta-D-fructose 1,6-bisphosphate + H2O = beta-D-fructose 6-phosphate + phosphate. It functions in the pathway carbohydrate biosynthesis; gluconeogenesis. The protein is Fructose-1,6-bisphosphatase class 1 of Colwellia psychrerythraea (strain 34H / ATCC BAA-681) (Vibrio psychroerythus).